A 149-amino-acid chain; its full sequence is Secreted RxLR effector protein 17 (149 aa).

Residues 1-24 (MRLFYFSAMSVIGLLARNNMVVVA) form the signal peptide. Residues 52–78 (RSLRTREKDIQDSTVAKDDAIKVEEDR) carry the RxLR-dEER motif.

The protein belongs to the RxLR effector family.

Its subcellular location is the secreted. It localises to the host cytoplasm. It is found in the host nucleus. Its function is as follows. Effector that acts as a broad suppressor of cell death to interrupt plant immunity. Inhibits cell death induced by cell death-inducing proteins, including the PAMP elicitor INF1 from P.infestans. The polypeptide is Secreted RxLR effector protein 17 (Plasmopara viticola (Downy mildew of grapevine)).